The chain runs to 2343 residues: Coagulation factor VIII (2343 aa).

An N-terminal signal peptide occupies residues 1-19 (MQVELYTCCFLCLLPFSLS). Plastocyanin-like domains follow at residues 20-199 (ATRK…LLVC) and 207-343 (ERTQ…VDSC). An F5/8 type A 1 domain is found at 20–343 (ATRKYYLGAV…MEAYVKVDSC (324 aa)). N-linked (GlcNAc...) asparagine glycosylation is found at N233 and N253. Residues Y359 and Y408 each carry the sulfotyrosine modification. Plastocyanin-like domains lie at 393 to 567 (KTWV…LLIC) and 577 to 724 (NQMM…VSSC). Residues 393-724 (KTWVHYIAAE…MTALLKVSSC (332 aa)) form the F5/8 type A 2 domain. N595 carries N-linked (GlcNAc...) asparagine glycosylation. Y731, Y732, and Y736 each carry sulfotyrosine. The span at 752-761 (PRSFSQNSRH) shows a compositional bias: polar residues. Disordered regions lie at residues 752–774 (PRSFSQNSRHPSTKEKQLKATTT) and 828–865 (ADDHSRGAIERNKGPPEVASLRPELRHSEDREFTPEPE). The segment at 754–1659 (SFSQNSRHPS…NPPVSKHHQR (906 aa)) is b. Basic and acidic residues-rich tracts occupy residues 828 to 841 (ADDHSRGAIERNKG) and 850 to 861 (PELRHSEDREFT). N877, N921, N937, N938, N956, N1007, N1019, N1037, N1062, N1069, and N1080 each carry an N-linked (GlcNAc...) asparagine glycan. A disordered region spans residues 1124-1147 (GKNSLSSEQRPSPKQLTSLGSEKS). The segment covering 1125–1147 (KNSLSSEQRPSPKQLTSLGSEKS) has biased composition (polar residues). N-linked (GlcNAc...) asparagine glycosylation is found at N1179, N1193, N1275, N1290, N1308, N1341, N1391, N1419, N1429, N1453, N1547, and N1618. A compositionally biased stretch (polar residues) spans 1302–1314 (TTRMSSNASQHVI). The interval 1302-1326 (TTRMSSNASQHVITQRGKRSLKQPR) is disordered. Positions 1592-1632 (KSQKKSQTNTAFKRKDTILPLGPCENNDSTAAINEGQDKPQ) are disordered. Residues Y1675 and Y1691 each carry the sulfotyrosine modification. Plastocyanin-like domains are found at residues 1705–1869 (KTRH…LLIC) and 1879–2032 (GRQV…SKKC). An F5/8 type A 3 domain is found at 1705–2032 (KTRHYFIAAV…TLFLVYSKKC (328 aa)). The N-linked (GlcNAc...) asparagine glycan is linked to N1821. F5/8 type C domains are found at residues 2032–2180 (CQTP…LLGC) and 2185–2337 (CSMP…VLGC). Cystine bridges form between C2032–C2180 and C2185–C2337. N-linked (GlcNAc...) asparagine glycans are attached at residues N2129 and N2281.

It belongs to the multicopper oxidase family. As to quaternary structure, interacts with vWF. vWF binding is essential for the stabilization of F8 in circulation. In terms of processing, proteolytically cleaved by cathepsin CTSG to produce a partially activated form.

The protein localises to the secreted. The protein resides in the extracellular space. Factor VIII, along with calcium and phospholipid, acts as a cofactor for factor IXa when it converts factor X to the activated form, factor Xa. This Canis lupus familiaris (Dog) protein is Coagulation factor VIII (F8).